The primary structure comprises 130 residues: Small ribosomal subunit protein uS11 (130 aa).

The protein belongs to the universal ribosomal protein uS11 family. Part of the 30S ribosomal subunit. Interacts with proteins S7 and S18. Binds to IF-3.

Located on the platform of the 30S subunit, it bridges several disparate RNA helices of the 16S rRNA. Forms part of the Shine-Dalgarno cleft in the 70S ribosome. In Gloeothece citriformis (strain PCC 7424) (Cyanothece sp. (strain PCC 7424)), this protein is Small ribosomal subunit protein uS11.